Consider the following 118-residue polypeptide: Small ribosomal subunit protein uS13 (118 aa).

The tract at residues 94–118 is disordered; that stretch reads SLPLRGQRTKTNARTRKGPRKPIKK.

Belongs to the universal ribosomal protein uS13 family. Part of the 30S ribosomal subunit. Forms a loose heterodimer with protein S19. Forms two bridges to the 50S subunit in the 70S ribosome.

In terms of biological role, located at the top of the head of the 30S subunit, it contacts several helices of the 16S rRNA. In the 70S ribosome it contacts the 23S rRNA (bridge B1a) and protein L5 of the 50S subunit (bridge B1b), connecting the 2 subunits; these bridges are implicated in subunit movement. Contacts the tRNAs in the A and P-sites. The chain is Small ribosomal subunit protein uS13 from Shewanella amazonensis (strain ATCC BAA-1098 / SB2B).